A 1040-amino-acid chain; its full sequence is Multidrug resistance protein MdtB (1040 aa).

The next 12 membrane-spanning stretches (helical) occupy residues 25–45 (LLMA…PVAA), 347–367 (LMLA…NIPA), 369–389 (IIPG…MVFL), 396–416 (LTLM…IVVI), 440–460 (IGFT…PLLF), 472–492 (FAVT…TLTP), 537–557 (WLTL…WIVI), 863–883 (LGST…VLGV), 888–908 (FIHP…ALLA), 910–930 (IIAG…LIGI), 968–988 (ILMT…STGV), and 998–1018 (IAMV…TPVI).

This sequence belongs to the resistance-nodulation-cell division (RND) (TC 2.A.6) family. MdtB subfamily. As to quaternary structure, part of a tripartite efflux system composed of MdtA, MdtB and MdtC. MdtB forms a heteromultimer with MdtC.

The protein localises to the cell inner membrane. The chain is Multidrug resistance protein MdtB from Salmonella paratyphi A (strain ATCC 9150 / SARB42).